Reading from the N-terminus, the 241-residue chain is MSDKNPQYSRILLKLSGEALAGGLGMGIDTSVLDKMSLAIAHLCGLGVQVGIVVGGGNLYRGSQLQKEGLVGRVTGDQMGMLATVMNGLAMRDALERRNINTRLMSALPIGEVTESYSSRNAIRYLKNGDVCIFVAGTGNPFFTTDTAACLRGIEIEAGVILKATKVDGVYDKDPSEHADAKKYDALTFDEVLEQKLGVMDLTAIALCREHNVPLQVFDMNKPNSLLNVIMGENEGTRVFH.

14-17 is a binding site for ATP; that stretch reads KLSG. Positions 22–27 are involved in allosteric activation by GTP; sequence GGLGMG. Gly-56 is a UMP binding site. The ATP site is built by Gly-57 and Arg-61. Residues Asp-77 and 138-145 each bind UMP; that span reads TGNPFFTT. Residues Thr-165, Tyr-171, and Asp-174 each contribute to the ATP site.

The protein belongs to the UMP kinase family. Homohexamer.

The protein resides in the cytoplasm. It carries out the reaction UMP + ATP = UDP + ADP. It functions in the pathway pyrimidine metabolism; CTP biosynthesis via de novo pathway; UDP from UMP (UMPK route): step 1/1. With respect to regulation, allosterically activated by GTP. Inhibited by UTP. Catalyzes the reversible phosphorylation of UMP to UDP. The chain is Uridylate kinase from Psychrobacter sp. (strain PRwf-1).